The sequence spans 252 residues: C-type lectin domain family 2 member D3 (252 aa).

The interval 1-58 is disordered; it reads MSSSAHLQDAPPLLSGTLTQNEGQTSLRQSSSCGPSAASASESLSGYTESRIPHSKVR. The Cytoplasmic segment spans residues 1 to 78; the sequence is MSSSAHLQDA…ESRVKRYCCY (78 aa). Over residues 16-29 the composition is skewed to polar residues; the sequence is GTLTQNEGQTSLRQ. Low complexity predominate over residues 30–43; it reads SSSCGPSAASASES. The chain crosses the membrane as a helical; Signal-anchor for type II membrane protein span at residues 79 to 99; it reads GGVITVVAIAIVVPLSVTLSV. Residues 100–252 are Extracellular-facing; it reads KQMEQTSINN…KPKKYISQSQ (153 aa). Residues 137–242 enclose the C-type lectin domain; it reads YGNKCFYFSE…VYVERPWICS (106 aa). A glycan (N-linked (GlcNAc...) asparagine) is linked at Asn-150. The cysteines at positions 158 and 241 are disulfide-linked.

The protein resides in the cell membrane. Lectin-type cell surface receptor. This is C-type lectin domain family 2 member D3 (Clec2d3) from Rattus norvegicus (Rat).